The following is a 663-amino-acid chain: Oligopeptide-binding protein SarA (663 aa).

Positions Met-1–Ala-22 are cleaved as a signal peptide. Cys-23 carries the N-palmitoyl cysteine lipid modification. Cys-23 carries S-diacylglycerol cysteine lipidation. A disordered region spans residues Gln-637–Lys-663.

The protein belongs to the bacterial solute-binding protein 5 family.

It localises to the cell membrane. May be involved in the expression of cell surface properties important for colonization of the human oral cavity. It may also be involved in uptake processes. The polypeptide is Oligopeptide-binding protein SarA (sarA) (Streptococcus gordonii (strain Challis / ATCC 35105 / BCRC 15272 / CH1 / DL1 / V288)).